Reading from the N-terminus, the 39-residue chain is Photosystem II reaction center protein J (39 aa).

The helical transmembrane segment at 7 to 27 threads the bilayer; sequence IPLWLVATVAGMGVITLLGIF.

Belongs to the PsbJ family. As to quaternary structure, PSII is composed of 1 copy each of membrane proteins PsbA, PsbB, PsbC, PsbD, PsbE, PsbF, PsbH, PsbI, PsbJ, PsbK, PsbL, PsbM, PsbT, PsbX, PsbY, PsbZ, Psb30/Ycf12, peripheral proteins PsbO, CyanoQ (PsbQ), PsbU, PsbV and a large number of cofactors. It forms dimeric complexes.

It is found in the cellular thylakoid membrane. In terms of biological role, one of the components of the core complex of photosystem II (PSII). PSII is a light-driven water:plastoquinone oxidoreductase that uses light energy to abstract electrons from H(2)O, generating O(2) and a proton gradient subsequently used for ATP formation. It consists of a core antenna complex that captures photons, and an electron transfer chain that converts photonic excitation into a charge separation. The polypeptide is Photosystem II reaction center protein J (Cyanothece sp. (strain PCC 7425 / ATCC 29141)).